The primary structure comprises 77 residues: Large ribosomal subunit protein bL31 (77 aa).

4 residues coordinate Zn(2+): Cys-16, Cys-18, Cys-37, and Cys-40.

The protein belongs to the bacterial ribosomal protein bL31 family. Type A subfamily. In terms of assembly, part of the 50S ribosomal subunit. Zn(2+) serves as cofactor.

Binds the 23S rRNA. The sequence is that of Large ribosomal subunit protein bL31 from Pseudomonas fluorescens (strain SBW25).